We begin with the raw amino-acid sequence, 504 residues long: Anaerobic nitric oxide reductase transcription regulator NorR (504 aa).

Position 57 is a 4-aspartylphosphate (aspartate 57). A Sigma-54 factor interaction domain is found at 187–416; that stretch reads MIGLSPGMTQ…LEHAIHRAVV (230 aa). ATP contacts are provided by residues 215 to 222 and 278 to 287; these read GETGTGKE and ADNGTLFLDE. Residues 479-498 constitute a DNA-binding region (H-T-H motif); it reads WAACARMLETDVANLHRLAK.

Its pathway is nitrogen metabolism; nitric oxide reduction. Required for the expression of anaerobic nitric oxide (NO) reductase, acts as a transcriptional activator for at least the norVW operon. Activation also requires sigma-54. In Shigella boydii serotype 4 (strain Sb227), this protein is Anaerobic nitric oxide reductase transcription regulator NorR.